The chain runs to 440 residues: Xylose isomerase (440 aa).

Residues H100 and D103 contribute to the active site. Mg(2+) is bound by residues E231, E267, H270, D295, D306, D308, and D338.

This sequence belongs to the xylose isomerase family. In terms of assembly, homotetramer. Requires Mg(2+) as cofactor.

The protein resides in the cytoplasm. It carries out the reaction alpha-D-xylose = alpha-D-xylulofuranose. This is Xylose isomerase from Burkholderia thailandensis (strain ATCC 700388 / DSM 13276 / CCUG 48851 / CIP 106301 / E264).